The following is a 261-amino-acid chain: Sulfur carrier protein FdhD (261 aa).

Cys105 functions as the Cysteine persulfide intermediate in the catalytic mechanism. A Mo-bis(molybdopterin guanine dinucleotide)-binding site is contributed by 245 to 250; sequence FIRGDR.

The protein belongs to the FdhD family.

It is found in the cytoplasm. Its function is as follows. Required for formate dehydrogenase (FDH) activity. Acts as a sulfur carrier protein that transfers sulfur from IscS to the molybdenum cofactor prior to its insertion into FDH. This chain is Sulfur carrier protein FdhD, found in Listeria monocytogenes serotype 4b (strain F2365).